We begin with the raw amino-acid sequence, 485 residues long: Elongation factor TuB, chloroplastic (485 aa).

The transit peptide at 1-76 (MASISAASAT…TTHPRRFTVR (76 aa)) directs the protein to the chloroplast. Residues 86-290 (KPHVNIGTIG…NVDEYIPIPQ (205 aa)) enclose the tr-type G domain. Residues 95–102 (GHVDHGKT) are G1. 95-102 (GHVDHGKT) contributes to the GTP binding site. The tract at residues 136-140 (GITIN) is G2. Positions 157–160 (DCPG) are G3. GTP-binding positions include 157–161 (DCPGH) and 212–215 (NKQD). Positions 212–215 (NKQD) are G4. Positions 250 to 252 (SAL) are G5.

The protein belongs to the TRAFAC class translation factor GTPase superfamily. Classic translation factor GTPase family. EF-Tu/EF-1A subfamily.

The protein resides in the plastid. It is found in the chloroplast. Its function is as follows. This protein promotes the GTP-dependent binding of aminoacyl-tRNA to the A-site of ribosomes during protein biosynthesis. The sequence is that of Elongation factor TuB, chloroplastic (TUFB) from Nicotiana sylvestris (Wood tobacco).